We begin with the raw amino-acid sequence, 377 residues long: MNKKEDYYKILGIDKSANEKEIKKAYRKLAMEHHPDRSSSKESEAKMREINEAYEVLSNPEKKAIYDKYGHEAANNPGFNGFNAGSAGFGNFGGFSNFGGFDSIFEEFFGGSRSHSKQNSNYPYPGESYSTQVKISFLDSVHGRVISQKLDKYKDCESCNGTGARSKSDIKTCSTCNGRGSVEKLVNSLFGKIKQSVTCSTCNGLGQEITHKCPSCKGAKKIKESISQKISIPAGVISGQEVLLRGFGGPGFNGGPNGDLYIRVYVTEHPYYQRINDDIYVDFPISIVNLILEKPVVVPTPYGDEKIKIKSTFKNDQIITFKGKGFKRKNRVGDLKIRLKFEIPNFSSKVKKNLESLLSETNDSINEDFVKKVNSIK.

A J domain is found at 6-70 (DYYKILGIDK…EKKAIYDKYG (65 aa)). The segment at 143–225 (GRVISQKLDK…CKGAKKIKES (83 aa)) adopts a CR-type zinc-finger fold. 8 residues coordinate Zn(2+): Cys156, Cys159, Cys173, Cys176, Cys199, Cys202, Cys213, and Cys216. CXXCXGXG motif repeat units lie at residues 156-163 (CESCNGTG), 173-180 (CSTCNGRG), 199-206 (CSTCNGLG), and 213-220 (CPSCKGAK).

It belongs to the DnaJ family. Homodimer. The cofactor is Zn(2+).

The protein resides in the cytoplasm. In terms of biological role, participates actively in the response to hyperosmotic and heat shock by preventing the aggregation of stress-denatured proteins and by disaggregating proteins, also in an autonomous, DnaK-independent fashion. Unfolded proteins bind initially to DnaJ; upon interaction with the DnaJ-bound protein, DnaK hydrolyzes its bound ATP, resulting in the formation of a stable complex. GrpE releases ADP from DnaK; ATP binding to DnaK triggers the release of the substrate protein, thus completing the reaction cycle. Several rounds of ATP-dependent interactions between DnaJ, DnaK and GrpE are required for fully efficient folding. Also involved, together with DnaK and GrpE, in the DNA replication of plasmids through activation of initiation proteins. This chain is Chaperone protein DnaJ, found in Mycoplasmopsis pulmonis (strain UAB CTIP) (Mycoplasma pulmonis).